The chain runs to 258 residues: UDP-N-acetylenolpyruvoylglucosamine reductase (258 aa).

The active site involves Arg-142. Catalysis depends on Ser-184, which acts as the Proton donor. Glu-254 is a catalytic residue.

Belongs to the MurB family. FAD is required as a cofactor.

The protein resides in the cytoplasm. The catalysed reaction is UDP-N-acetyl-alpha-D-muramate + NADP(+) = UDP-N-acetyl-3-O-(1-carboxyvinyl)-alpha-D-glucosamine + NADPH + H(+). Its pathway is cell wall biogenesis; peptidoglycan biosynthesis. In terms of biological role, cell wall formation. The protein is UDP-N-acetylenolpyruvoylglucosamine reductase of Campylobacter jejuni (strain RM1221).